Reading from the N-terminus, the 249-residue chain is Transcription repressor MYB5 (249 aa).

2 consecutive HTH myb-type domains span residues 20–72 and 73–127; these read KMGM…MNYL and RPSV…RKKL. 2 consecutive DNA-binding regions (H-T-H motif) follow at residues 48–72 and 100–123; these read WRSL…MNYL and WSLI…NTHL. The disordered stretch occupies residues 133-180; sequence DPQTHKPLDANNIHKPEEEVSGGQKYPLEPISSSHTDDTTVNGGDGDS. A compositionally biased stretch (basic and acidic residues) spans 135 to 150; sequence QTHKPLDANNIHKPEE.

In terms of assembly, interacts with BHLH002/EGL3/MYC146, BHLH012/MYC1 and BHLH042/TT8. As to expression, siliques.

It is found in the nucleus. Transcription activator, when associated with BHLH002/EGL3/MYC146, BHLH012/MYC1 or BHLH042/TT8. This is Transcription repressor MYB5 (MYB5) from Arabidopsis thaliana (Mouse-ear cress).